Reading from the N-terminus, the 174-residue chain is UPF0200 protein PAE1629 (174 aa).

Position 9–16 (9–16 (GLPGSGKT)) interacts with ATP.

It belongs to the UPF0200 family.

This is UPF0200 protein PAE1629 from Pyrobaculum aerophilum (strain ATCC 51768 / DSM 7523 / JCM 9630 / CIP 104966 / NBRC 100827 / IM2).